We begin with the raw amino-acid sequence, 393 residues long: Arginine biosynthesis bifunctional protein ArgJ (393 aa).

Substrate is bound by residues Thr143, Lys168, Thr179, Glu265, Asn388, and Thr393. Thr179 (nucleophile) is an active-site residue.

Belongs to the ArgJ family. Heterotetramer of two alpha and two beta chains.

The protein resides in the cytoplasm. It carries out the reaction N(2)-acetyl-L-ornithine + L-glutamate = N-acetyl-L-glutamate + L-ornithine. It catalyses the reaction L-glutamate + acetyl-CoA = N-acetyl-L-glutamate + CoA + H(+). Its pathway is amino-acid biosynthesis; L-arginine biosynthesis; L-ornithine and N-acetyl-L-glutamate from L-glutamate and N(2)-acetyl-L-ornithine (cyclic): step 1/1. It functions in the pathway amino-acid biosynthesis; L-arginine biosynthesis; N(2)-acetyl-L-ornithine from L-glutamate: step 1/4. Its function is as follows. Catalyzes two activities which are involved in the cyclic version of arginine biosynthesis: the synthesis of N-acetylglutamate from glutamate and acetyl-CoA as the acetyl donor, and of ornithine by transacetylation between N(2)-acetylornithine and glutamate. The sequence is that of Arginine biosynthesis bifunctional protein ArgJ from Syntrophotalea carbinolica (strain DSM 2380 / NBRC 103641 / GraBd1) (Pelobacter carbinolicus).